The following is a 297-amino-acid chain: Phosphatidylglycerol--prolipoprotein diacylglyceryl transferase (297 aa).

Helical transmembrane passes span 20–40, 57–77, 107–127, and 133–153; these read FITI…GLFI, EILP…YVIF, WEGG…IIFF, and IHLK…QSIG. Arg-154 is a binding site for a 1,2-diacyl-sn-glycero-3-phospho-(1'-sn-glycerol). A run of 3 helical transmembrane segments spans residues 193 to 213, 225 to 245, and 266 to 286; these read PTFL…ILIF, GFIS…IEGL, and AQFI…FLRL.

This sequence belongs to the Lgt family.

It is found in the cell inner membrane. It catalyses the reaction L-cysteinyl-[prolipoprotein] + a 1,2-diacyl-sn-glycero-3-phospho-(1'-sn-glycerol) = an S-1,2-diacyl-sn-glyceryl-L-cysteinyl-[prolipoprotein] + sn-glycerol 1-phosphate + H(+). It participates in protein modification; lipoprotein biosynthesis (diacylglyceryl transfer). In terms of biological role, catalyzes the transfer of the diacylglyceryl group from phosphatidylglycerol to the sulfhydryl group of the N-terminal cysteine of a prolipoprotein, the first step in the formation of mature lipoproteins. This chain is Phosphatidylglycerol--prolipoprotein diacylglyceryl transferase, found in Prochlorococcus marinus (strain MIT 9301).